Reading from the N-terminus, the 327-residue chain is 4-hydroxy-2-oxoglutarate aldolase, mitochondrial (327 aa).

A mitochondrion-targeting transit peptide spans 1–25 (MLGPQVWSSVRQGLSRSLSRNVGVW). 77–78 (SN) is a substrate binding site. The active-site Schiff-base intermediate with substrate is the K196. Residues S198 and G222 each coordinate substrate.

This sequence belongs to the DapA family. As to quaternary structure, homotetramer.

It localises to the mitochondrion. It carries out the reaction (4S)-4-hydroxy-2-oxoglutarate = glyoxylate + pyruvate. The catalysed reaction is (4R)-4-hydroxy-2-oxoglutarate = glyoxylate + pyruvate. With respect to regulation, inhibited by divalent cations. Functionally, catalyzes the final step in the metabolic pathway of hydroxyproline. This Homo sapiens (Human) protein is 4-hydroxy-2-oxoglutarate aldolase, mitochondrial (HOGA1).